A 75-amino-acid chain; its full sequence is CLAVATA3/ESR (CLE)-related protein 2 (75 aa).

Residues 1–22 form the signal peptide; sequence MAKLSFTFCFLLFLLLSSIAAG. The segment at 40-75 is disordered; that stretch reads PSIEATSPTVEDDQAAGSHGKSPERLSPGGPDPQHH. 2 positions are modified to hydroxyproline: proline 67 and proline 70. O-linked (Ara...) hydroxyproline glycosylation occurs at proline 70.

The protein belongs to the CLV3/ESR signal peptide family. In terms of assembly, interacts with the extracellular leucine-rich repeat region of CLV1. The O-glycosylation (arabinosylation) of the hydroxyproline Pro-70 enhances binding affinity of the CLE2p peptide for its receptor. Mostly expressed in roots and seedlings, and, to a lower extent, in apex.

Its subcellular location is the secreted. The protein localises to the extracellular space. Functionally, extracellular signal peptide that regulates cell fate. May act with CLV1 as a ligand-receptor pair in a signal transduction pathway, coordinating growth between adjacent meristematic regions. The sequence is that of CLAVATA3/ESR (CLE)-related protein 2 from Arabidopsis thaliana (Mouse-ear cress).